The primary structure comprises 175 residues: Ferritin light chain (175 aa).

Serine 2 carries the post-translational modification N-acetylserine. Residues 7 to 156 (QNYSTEVEAA…DHLTNIQRLV (150 aa)) enclose the Ferritin-like diiron domain. Residues glutamate 54, glutamate 57, glutamate 58, glutamate 61, and glutamate 64 each coordinate Fe cation. Residues 54–61 (ELAEEKRE) form a catalytic site for iron oxidation region.

It belongs to the ferritin family. As to quaternary structure, oligomer of 24 subunits. There are two types of subunits: L (light) chain and H (heavy) chain. The major chain can be light or heavy, depending on the species and tissue type. The functional molecule forms a roughly spherical shell with a diameter of 12 nm and contains a central cavity into which the insoluble mineral iron core is deposited. Interacts with NCOA4.

The protein localises to the cytoplasmic vesicle. The protein resides in the autophagosome. It is found in the cytoplasm. It localises to the autolysosome. Its function is as follows. Stores iron in a soluble, non-toxic, readily available form. Important for iron homeostasis. Iron is taken up in the ferrous form and deposited as ferric hydroxides after oxidation. Also plays a role in delivery of iron to cells. Mediates iron uptake in capsule cells of the developing kidney. Delivery to lysosomes by the cargo receptor NCOA4 for autophagic degradation and release or iron. The chain is Ferritin light chain (FTL) from Equus caballus (Horse).